We begin with the raw amino-acid sequence, 853 residues long: DNA mismatch repair protein MutS (853 aa).

614-621 (GPNMGGKS) is an ATP binding site.

Belongs to the DNA mismatch repair MutS family.

Its function is as follows. This protein is involved in the repair of mismatches in DNA. It is possible that it carries out the mismatch recognition step. This protein has a weak ATPase activity. The polypeptide is DNA mismatch repair protein MutS (Shigella flexneri serotype 5b (strain 8401)).